Consider the following 304-residue polypeptide: Ribonuclease Z (304 aa).

H63, H65, D67, H68, H141, D208, and H266 together coordinate Zn(2+). Catalysis depends on D67, which acts as the Proton acceptor.

It belongs to the RNase Z family. In terms of assembly, homodimer. Zn(2+) is required as a cofactor.

It catalyses the reaction Endonucleolytic cleavage of RNA, removing extra 3' nucleotides from tRNA precursor, generating 3' termini of tRNAs. A 3'-hydroxy group is left at the tRNA terminus and a 5'-phosphoryl group is left at the trailer molecule.. Its function is as follows. Zinc phosphodiesterase, which displays some tRNA 3'-processing endonuclease activity. Probably involved in tRNA maturation, by removing a 3'-trailer from precursor tRNA. This is Ribonuclease Z from Chlamydia trachomatis serovar L2 (strain ATCC VR-902B / DSM 19102 / 434/Bu).